The following is a 490-amino-acid chain: Betaine aldehyde dehydrogenase (490 aa).

Positions 26, 27, and 93 each coordinate K(+). 150–152 (GAW) is an NAD(+) binding site. The active-site Charge relay system is the lysine 162. Residue 176-179 (KPSE) coordinates NAD(+). Valine 180 contacts K(+). 230 to 233 (GVAT) provides a ligand contact to NAD(+). Leucine 246 is a K(+) binding site. The active-site Proton acceptor is glutamate 252. NAD(+) is bound by residues glycine 254, cysteine 286, and glutamate 387. The Nucleophile role is filled by cysteine 286. A Cysteine sulfenic acid (-SOH) modification is found at cysteine 286. The K(+) site is built by lysine 457 and glycine 460. Catalysis depends on glutamate 464, which acts as the Charge relay system.

This sequence belongs to the aldehyde dehydrogenase family. As to quaternary structure, dimer of dimers. It depends on K(+) as a cofactor.

It carries out the reaction betaine aldehyde + NAD(+) + H2O = glycine betaine + NADH + 2 H(+). The protein operates within amine and polyamine biosynthesis; betaine biosynthesis via choline pathway; betaine from betaine aldehyde: step 1/1. In terms of biological role, involved in the biosynthesis of the osmoprotectant glycine betaine. Catalyzes the irreversible oxidation of betaine aldehyde to the corresponding acid. The chain is Betaine aldehyde dehydrogenase from Stutzerimonas stutzeri (strain A1501) (Pseudomonas stutzeri).